A 412-amino-acid chain; its full sequence is FAD-dependent monooxygenase nscC (412 aa).

The N-terminal stretch at 1 to 21 (MGKPQETILIIGAGIAGLTAS) is a signal peptide. Glutamate 35 and alanine 46 together coordinate FAD. 2 N-linked (GlcNAc...) asparagine glycosylation sites follow: asparagine 68 and asparagine 92. An FAD-binding site is contributed by arginine 119. Asparagine 170, asparagine 231, and asparagine 251 each carry an N-linked (GlcNAc...) asparagine glycan. Positions 326 and 339 each coordinate FAD.

Belongs to the paxM FAD-dependent monooxygenase family. It depends on FAD as a cofactor.

It participates in secondary metabolite biosynthesis. Its function is as follows. FAD-dependent monooxygenase; part of the gene cluster that mediates the biosynthesis of neosartoricin B, a prenylated anthracenone that probably exhibits T-cell antiproliferative activity, suggestive of a physiological role as an immunosuppressive agent. The non-reducing polyketide synthase nscA probably synthesizes and cyclizes the decaketide backbone. The hydrolase nscB then mediates the product release through hydrolysis followed by spontaneous decarboxylation. The prenyltransferase nscD catalyzes the addition of the dimethylallyl group to the aromatic C5. The FAD-dependent monooxygenase nscC is then responsible for the stereospecific hydroxylation at C2. Neosartoricin B can be converted into two additional compounds neosartoricins C and D. Neosartoricin C is a spirocyclic compound that is cyclized through the attack of C3 hydroxyl on C14, followed by dehydration. On the other hand, neosartoricin D is a further cyclized compound in which attack of C2 on C14 in neosartoricin C results in the formation of the acetal-containing dioxabicyclo-octanone ring. Both of these compounds are novel and possibly represent related metabolites of the gene cluster. The protein is FAD-dependent monooxygenase nscC of Trichophyton rubrum (strain ATCC MYA-4607 / CBS 118892) (Athlete's foot fungus).